Consider the following 1103-residue polypeptide: Isoleucine--tRNA ligase (1103 aa).

Residues 1–25 (MSENVYPKANEGGETAHVAPNPSFP) form a disordered region. Positions 65 to 75 (PFANGLPHYGH) match the 'HIGH' region motif. The 'KMSKS' region motif lies at 649–653 (KMSKH). Lys-652 contributes to the ATP binding site.

The protein belongs to the class-I aminoacyl-tRNA synthetase family. IleS type 2 subfamily. In terms of assembly, monomer. Zn(2+) serves as cofactor.

It is found in the cytoplasm. The enzyme catalyses tRNA(Ile) + L-isoleucine + ATP = L-isoleucyl-tRNA(Ile) + AMP + diphosphate. Functionally, catalyzes the attachment of isoleucine to tRNA(Ile). As IleRS can inadvertently accommodate and process structurally similar amino acids such as valine, to avoid such errors it has two additional distinct tRNA(Ile)-dependent editing activities. One activity is designated as 'pretransfer' editing and involves the hydrolysis of activated Val-AMP. The other activity is designated 'posttransfer' editing and involves deacylation of mischarged Val-tRNA(Ile). The chain is Isoleucine--tRNA ligase from Bifidobacterium longum (strain NCC 2705).